The primary structure comprises 347 residues: Phosphoribosylformylglycinamidine cyclo-ligase (347 aa).

This sequence belongs to the AIR synthase family.

Its subcellular location is the cytoplasm. It carries out the reaction 2-formamido-N(1)-(5-O-phospho-beta-D-ribosyl)acetamidine + ATP = 5-amino-1-(5-phospho-beta-D-ribosyl)imidazole + ADP + phosphate + H(+). It functions in the pathway purine metabolism; IMP biosynthesis via de novo pathway; 5-amino-1-(5-phospho-D-ribosyl)imidazole from N(2)-formyl-N(1)-(5-phospho-D-ribosyl)glycinamide: step 2/2. In Syntrophus aciditrophicus (strain SB), this protein is Phosphoribosylformylglycinamidine cyclo-ligase.